The sequence spans 100 residues: Small ribosomal subunit protein uS14c (100 aa).

This sequence belongs to the universal ribosomal protein uS14 family. As to quaternary structure, part of the 30S ribosomal subunit.

It localises to the plastid. It is found in the chloroplast. Its function is as follows. Binds 16S rRNA, required for the assembly of 30S particles. This Nephroselmis olivacea (Green alga) protein is Small ribosomal subunit protein uS14c.